Reading from the N-terminus, the 376-residue chain is uncharacterized protein (376 aa).

A signal peptide spans 1 to 31 (MSRHKVYKAISSYVIIAIIIIAIVAVVGVLL). Residues 37-57 (SSSSVTSTTTPTTSSSVSPSS) form a disordered region.

Belongs to the bacterial solute-binding protein 1 family. WtpA subfamily.

This is an uncharacterized protein from Sulfurisphaera tokodaii (strain DSM 16993 / JCM 10545 / NBRC 100140 / 7) (Sulfolobus tokodaii).